Reading from the N-terminus, the 361-residue chain is Peptide chain release factor 1 (361 aa).

Q236 is modified (N5-methylglutamine).

It belongs to the prokaryotic/mitochondrial release factor family. Post-translationally, methylated by PrmC. Methylation increases the termination efficiency of RF1.

The protein resides in the cytoplasm. Peptide chain release factor 1 directs the termination of translation in response to the peptide chain termination codons UAG and UAA. This Lactobacillus delbrueckii subsp. bulgaricus (strain ATCC BAA-365 / Lb-18) protein is Peptide chain release factor 1.